The sequence spans 930 residues: Isoleucine--tRNA ligase (930 aa).

A 'HIGH' region motif is present at residues 57–67 (PYANGNIHVGH). E554 is a binding site for L-isoleucyl-5'-AMP. Positions 595–599 (KMSKS) match the 'KMSKS' region motif. ATP is bound at residue K598. The Zn(2+) site is built by C888, C891, C908, and C911.

This sequence belongs to the class-I aminoacyl-tRNA synthetase family. IleS type 1 subfamily. In terms of assembly, monomer. It depends on Zn(2+) as a cofactor.

It localises to the cytoplasm. It catalyses the reaction tRNA(Ile) + L-isoleucine + ATP = L-isoleucyl-tRNA(Ile) + AMP + diphosphate. Functionally, catalyzes the attachment of isoleucine to tRNA(Ile). As IleRS can inadvertently accommodate and process structurally similar amino acids such as valine, to avoid such errors it has two additional distinct tRNA(Ile)-dependent editing activities. One activity is designated as 'pretransfer' editing and involves the hydrolysis of activated Val-AMP. The other activity is designated 'posttransfer' editing and involves deacylation of mischarged Val-tRNA(Ile). This chain is Isoleucine--tRNA ligase, found in Streptococcus pneumoniae (strain CGSP14).